A 214-amino-acid chain; its full sequence is Nicotinamidase (214 aa).

The active-site Proton acceptor is Asp-18. A divalent metal cation contacts are provided by Asp-56, His-58, His-62, and His-91. Lys-116 is a catalytic residue. The Nucleophile role is filled by Cys-161.

This sequence belongs to the isochorismatase family. A divalent metal cation serves as cofactor.

It catalyses the reaction nicotinamide + H2O = nicotinate + NH4(+). It participates in cofactor biosynthesis; nicotinate biosynthesis; nicotinate from nicotinamide: step 1/1. Its function is as follows. Catalyzes the deamidation of nicotinamide (NAM) into nicotinate (Na). Functions in the deamidating salvage pathway for production of NAD from nicotinamide. The polypeptide is Nicotinamidase (Acinetobacter baylyi (strain ATCC 33305 / BD413 / ADP1)).